The primary structure comprises 346 residues: MLVLGIESSCDETGLALYDTQRGLLAHALHSQIAMHREYGGVVPELASRDHIRRALPLLEEVMAQSGTHRDDIDAIAFTQGPGLAGALLVGASIANALALAWNKPTVGIHHLEGHLLSPLLVDEPPPFPFIALLVSGGHTQLMRVTDVGVYETLGETLDDAAGEAFDKTAKLIGLGYPGGPEVSKLAETGTPGAVVLPRPMLHSGDLDFSFSGLKTAVLTQMKKFEAAKLDGEALERAKADLARGFVDAAVDVLVAKSLAALKQTKLKRLVVAGGVGANRQLRAALSAAAAKRGFDVHYPDLALCTDNGAMIALAGALRLGRWPEQANADYAFTVKPRWDLASLAR.

Fe cation contacts are provided by His111 and His115. Substrate is bound by residues 134–138 (LVSGG), Asp167, Gly180, and Asn279. Asp307 contacts Fe cation.

This sequence belongs to the KAE1 / TsaD family. It depends on Fe(2+) as a cofactor.

The protein localises to the cytoplasm. The enzyme catalyses L-threonylcarbamoyladenylate + adenosine(37) in tRNA = N(6)-L-threonylcarbamoyladenosine(37) in tRNA + AMP + H(+). In terms of biological role, required for the formation of a threonylcarbamoyl group on adenosine at position 37 (t(6)A37) in tRNAs that read codons beginning with adenine. Is involved in the transfer of the threonylcarbamoyl moiety of threonylcarbamoyl-AMP (TC-AMP) to the N6 group of A37, together with TsaE and TsaB. TsaD likely plays a direct catalytic role in this reaction. This is tRNA N6-adenosine threonylcarbamoyltransferase from Burkholderia ambifaria (strain ATCC BAA-244 / DSM 16087 / CCUG 44356 / LMG 19182 / AMMD) (Burkholderia cepacia (strain AMMD)).